The following is a 320-amino-acid chain: Flavonol 4'-sulfotransferase (320 aa).

Residue K69–W74 participates in 3'-phosphoadenylyl sulfate binding. The active-site Proton acceptor is H129. 3'-phosphoadenylyl sulfate is bound by residues R151, S159, Y217, and R285–A287.

It belongs to the sulfotransferase 1 family. As to expression, highest in shoot tips and lowest in mature leaves and roots.

The protein resides in the cytoplasm. It catalyses the reaction quercetin 3-sulfate + 3'-phosphoadenylyl sulfate = quercetin 3,4'-bissulfate + adenosine 3',5'-bisphosphate + H(+). No requirement for divalent cations and insensitive to p-chloromercuribenzoate, iodoacetate, or iodoacetamide. Its function is as follows. Sulfotransferase that utilizes 3'-phospho-5'-adenylyl sulfate (PAPS) as sulfonate donor to catalyze the sulfate conjugation of quercetin 3-sulfate &gt; kaempferol 3-sulfate &gt; isorhamnetin 3-sulfate &gt; patuletin 3-sulfate, but not tamarixetin 3-sulfate. O-sulfation of position 4' of flavonol. May play a role in auxin transport. The polypeptide is Flavonol 4'-sulfotransferase (Flaveria chlorifolia (Clasping yellowtops)).